We begin with the raw amino-acid sequence, 121 residues long: MARIAGVDIPREKRVVISLTYIYGIGTSTAQKILEEANVSADTRVKDLTDDELGRIREVVDGYKVEGDLRRETNLNIKRLMEISSYRGIRHRRGLPVRGQKTKNNARTRKGPVKTVANKKK.

Positions 91–121 (HRRGLPVRGQKTKNNARTRKGPVKTVANKKK) are disordered.

It belongs to the universal ribosomal protein uS13 family. In terms of assembly, part of the 30S ribosomal subunit. Forms a loose heterodimer with protein S19. Forms two bridges to the 50S subunit in the 70S ribosome.

In terms of biological role, located at the top of the head of the 30S subunit, it contacts several helices of the 16S rRNA. In the 70S ribosome it contacts the 23S rRNA (bridge B1a) and protein L5 of the 50S subunit (bridge B1b), connecting the 2 subunits; these bridges are implicated in subunit movement. Contacts the tRNAs in the A and P-sites. This is Small ribosomal subunit protein uS13 from Staphylococcus aureus (strain Mu3 / ATCC 700698).